Here is a 937-residue protein sequence, read N- to C-terminus: Isoleucine--tRNA ligase (937 aa).

Positions 58 to 68 (PYANGSIHIGH) match the 'HIGH' region motif. E561 is an L-isoleucyl-5'-AMP binding site. Positions 602–606 (KMSKS) match the 'KMSKS' region motif. K605 contacts ATP. Residues C900, C903, C920, and C923 each coordinate Zn(2+).

Belongs to the class-I aminoacyl-tRNA synthetase family. IleS type 1 subfamily. In terms of assembly, monomer. Zn(2+) serves as cofactor.

The protein resides in the cytoplasm. The catalysed reaction is tRNA(Ile) + L-isoleucine + ATP = L-isoleucyl-tRNA(Ile) + AMP + diphosphate. Catalyzes the attachment of isoleucine to tRNA(Ile). As IleRS can inadvertently accommodate and process structurally similar amino acids such as valine, to avoid such errors it has two additional distinct tRNA(Ile)-dependent editing activities. One activity is designated as 'pretransfer' editing and involves the hydrolysis of activated Val-AMP. The other activity is designated 'posttransfer' editing and involves deacylation of mischarged Val-tRNA(Ile). The sequence is that of Isoleucine--tRNA ligase from Photorhabdus laumondii subsp. laumondii (strain DSM 15139 / CIP 105565 / TT01) (Photorhabdus luminescens subsp. laumondii).